A 90-amino-acid chain; its full sequence is MIKNSFISVIPQEEKEENKGSVEFQVFSFTNKIRRLTSHLELHKKDFLSQRGLRKILGKRQRLLTYLLKKNRVRYKKLIGQLDIREPKIH.

This sequence belongs to the universal ribosomal protein uS15 family. As to quaternary structure, part of the 30S ribosomal subunit.

It is found in the plastid. The protein resides in the chloroplast. This is Small ribosomal subunit protein uS15c (rps15) from Dioscorea elephantipes (Elephant's foot yam).